The primary structure comprises 164 residues: MTDTQVTWLTQESHDRLKAELDQLIANRPVIAAEINDRREEGDLRENGGYHAAREEQGQQEARIRQLQDLLNIAKVGEAPKQSGVALPGSVVKVYYNDDKSDTETFLIATRQEGVNEGKLEVYSPNSPLGGALIDAKVGETRSYTVPNGNTVQVTLISAEPYHS.

A coiled-coil region spans residues 50–75 (YHAAREEQGQQEARIRQLQDLLNIAK).

The protein belongs to the GreA/GreB family.

Necessary for efficient RNA polymerase transcription elongation past template-encoded arresting sites. The arresting sites in DNA have the property of trapping a certain fraction of elongating RNA polymerases that pass through, resulting in locked ternary complexes. Cleavage of the nascent transcript by cleavage factors such as GreA or GreB allows the resumption of elongation from the new 3'terminus. GreA releases sequences of 2 to 3 nucleotides. The polypeptide is Transcription elongation factor GreA (Mycobacterium leprae (strain Br4923)).